Consider the following 70-residue polypeptide: MMSKLGVLLIICLLLCPLTAVPQDGDQPADQPAERMQDDISSEHHPFFDPVKRCCKYGWTCWLGCSPCGC.

An N-terminal signal peptide occupies residues 1–20 (MMSKLGVLLIICLLLCPLTA). Positions 21–51 (VPQDGDQPADQPAERMQDDISSEHHPFFDPV) are excised as a propeptide.

Post-translationally, contains 3 disulfide bonds. They are not added, since framework IV presents two different connectivities (I-V, II-III, IV-VI and I-III, II-V, IV-VI). As to expression, expressed by the venom duct.

It is found in the secreted. Its function is as follows. Mu-conotoxins block voltage-gated sodium channels (Nav). Blocks reversibly sodium channels in molluskan neurons, but has no effect on sodium currents in bovine chromaffin cells or in rat brain synaptosomes. Induces paralysis in bivalve mollusks (Mytilus). No effect are observed on fish (Gambusia) and fly larvae (Sarcophaga). Is approximately 6 times more potent than PnIVA in blockade of the sodium current in Lymnaea neurons. The chain is Mu-conotoxin PnIVB from Conus pennaceus (Feathered cone).